The sequence spans 906 residues: MESAIAEGGASRFSASSGGGGSRGAPQHYPKTAGNSEFLGKTPGQNAQKWIPARSTRRDDNSAANNSANEKERHDAIFRKVRGILNKLTPEKFDKLCLELLNVGVESKLILKGVILLIVDKALEEPKYSSLYAQLCLRLAEDAPNFDGPAAEGQPGQKQSTTFRRLLISKLQDEFENRTRNVDVYDKRENPLLPEEEEQRAIAKIKMLGNIKFIGELGKLDLIHESILHKCIKTLLEKKKRVQLKDMGEDLECLCQIMRTVGPRLDHERAKSLMDQYFARMCSLMLSKELPARIRFLLQDTVELREHHWVPRKAFLDNGPKTINQIRQDAVKDLGVFIPAPMAQGRSDFFLEGPFMPPRMKMDRDPLGGLADMFGQMPGSGIGTGPGVIQDRFSPTMGRHRSNQLFNGHGGHIMPPTQSQFGEMGGKFMKSQGLSQLYHNQSQGLLSQLQGQSKDMPPRFSKKGQLNADEISLRPAQSFLMNKNQVPKLQPQITMIPPSAQPPRTQTPPLGQTPQLGLKTNPPLIQEKPAKTSKKPPPSKEELLKLTEAVVTDYLNSGNANDAVSGVREMRAPKHFLPEMLSKVIILSLDRSDEDKEKASSLISLLKQEGIATSDNFMQAFLNVLEQCPKLEVDIPLVKSYLAQFAARAIISELVSISELAQPLESGTHFPLFLLCLQQLAKLQDREWLTELFQQSKVNMQKMLPEIDQNKDRMLEILEGKGLSFLFPLLKLEKELLKQIKLDPSPQTIYKWIKDNISPKLHVDKGFVNILMTSFLQYISSEVSPPSDETDSSSAPSKEQLEQEKQLLLSFKPVMQKFLHDHVDLQVSALYALQVHCYNSSFPKGMLLRFFVHFYDMEIIEEEAFLAWKEDITQEFPGKGKALFQVNQWLTWLETAEEEESEEEAD.

N-acetylmethionine is present on Met1. The interval 1–71 is disordered; the sequence is MESAIAEGGA…SAANNSANEK (71 aa). A Phosphoserine modification is found at Ser11. The MIF4G domain occupies 78–308; sequence FRKVRGILNK…QDTVELREHH (231 aa). Residue Thr89 is modified to Phosphothreonine. Arg359 is modified (omega-N-methylarginine). Ser394 is subject to Phosphoserine. N6-methyllysine is present on Lys430. Ser442 carries the phosphoserine modification. Positions 497 to 540 are disordered; the sequence is PPSAQPPRTQTPPLGQTPQLGLKTNPPLIQEKPAKTSKKPPPSK. Positions 502–515 are enriched in polar residues; the sequence is PPRTQTPPLGQTPQ. Arg504 carries the omega-N-methylarginine modification. 2 positions are modified to phosphothreonine: Thr507 and Thr513. An MI domain is found at 542 to 665; sequence ELLKLTEAVV…SISELAQPLE (124 aa). Lys574 is covalently cross-linked (Glycyl lysine isopeptide (Lys-Gly) (interchain with G-Cter in SUMO2)). Residues 719–903 enclose the W2 domain; that stretch reads EGKGLSFLFP…ETAEEEESEE (185 aa). Ser901 carries the post-translational modification Phosphoserine.

This sequence belongs to the eukaryotic initiation factor 4G family. As to quaternary structure, interacts with the serine/threonine protein kinases MKNK1 and MKNK2. Binds EIF4A and EIF3. Interacts with MIF4GD. Interacts with DAZAP2. Phosphorylation; hyperphosphorylated during mitosis. As to expression, ubiquitously expressed in all tissues examined.

Functionally, appears to play a role in the switch from cap-dependent to IRES-mediated translation during mitosis, apoptosis and viral infection. Cleaved by some caspases and viral proteases. The polypeptide is Eukaryotic translation initiation factor 4 gamma 2 (Mus musculus (Mouse)).